The primary structure comprises 152 residues: Transcription elongation factor Spt5 (152 aa).

The region spanning 94–124 is the KOW domain; the sequence is PGDLVEVIAGPFKGQKAKVVKIDESKDEVVV.

It belongs to the archaeal Spt5 family. In terms of assembly, heterodimer composed of Spt4 and Spt5. Interacts with RNA polymerase (RNAP) independently of nucleic acids. Forms a homodimer in solution.

Its function is as follows. Stimulates transcription elongation. The sequence is that of Transcription elongation factor Spt5 from Pyrococcus furiosus (strain ATCC 43587 / DSM 3638 / JCM 8422 / Vc1).